A 336-amino-acid chain; its full sequence is MPLPTRKIGQSLVSEIGFGSMGIARLGPSGFYGVVESDDERFKVLDAAHAAGCTFWDSAHLYGDSEELIGKWLKRTGKRNDIFLATKFGITPQGVRGDPDFVKEQCATSLERLGVDCIDLFYQHRVDPKTPIEITVGAMAELVKEGKVKYLGLSECSAKALRRAHAVHPIAALQIEYSPFVLDIEDPKIALLETARELGVTIVAYSPLGRGLLTGQYKSPDDFEPNDFRRTIPKFSADNFPKILDVVAQLKKIGEKHNATPGQVTLAWILAQGPEFIVIPGTKKIKYLEENVGAASIKLTEEEVAAVRKLAEESEIPGDRNARMGAMLIDSPELPQ.

Asp-57 is a binding site for NADP(+). Tyr-62 acts as the Proton donor in catalysis. Substrate is bound at residue His-124. Residues 154–155 (SE), Gln-174, 206–220 (SPLG…YKSP), and 283–291 (KKIKYLEEN) each bind NADP(+).

This sequence belongs to the aldo/keto reductase family. Aldo/keto reductase 2 subfamily.

It participates in mycotoxin biosynthesis. Aldo-keto reductase; part of the gene cluster that mediates the biosynthesis of strobilurin A, an antifungal polyketide that contains a key beta-methoxyacrylate toxophore that targets the complex III of the mitochondrial electron transport chain. Strobilurin biosynthesis begins with construction of benzoyl CoA by step-wise elimination of ammonia from phenylalanine by the phenylalanine ammonia-lyase str11, oxygenation by str8 and retro-Claisen reaction to form benzoic acid, which is activated to its CoA thiolester benzoyl CoA by the dedicated CoA ligase str10. Benzoyl CoA forms the starter unit for the highly reducing polyketide synthase stpks1 that produces the polyketide prestrobilutin A. The FAD-dependent oxygenase str9 then catalyzes the key oxidative rearrangement responsible for the creation of the beta-methoxyacrylate toxophore. Str9 performs epoxidation of the 2,3 olefin of prestrobilutin A, followed by Meinwald rearrangement to furnish the aldehyde intermediate. Rapid enolization of the aldehyde intermediate would give the beta-methoxyacrylate skeleton and methylations catalyzed by str2 and str3 complete the synthesis and lead to the production of strobilurin A. The short-chain dehydrogenase stl2 and the dehydrogenase str4 play a role in the shunt pathway leading to the production of bolineol. The cluster encodes no obvious halogenase gene that could be involved in production of strobilurin B, nor any obvious dimethylallyl-transferase that could be involved in the production of strobilurin G. It is possible that unknown proteins encoded in, or near, the cluster (such as str1 or stl1) may form new classes of halogenases or dimethylally-transferases, or that the responsible genes are located elsewhere on the genome. Similarly, proteins encoded by str5/str6 hydrolases appear to have no chemical role in the biosynthesis of strobilurin A. Finally, no obvious self-resistance gene is found within the cluster. In Strobilurus tenacellus, this protein is Aldo-keto reductase str7.